A 188-amino-acid polypeptide reads, in one-letter code: Elongation factor P (188 aa).

It belongs to the elongation factor P family.

The protein localises to the cytoplasm. It participates in protein biosynthesis; polypeptide chain elongation. Involved in peptide bond synthesis. Stimulates efficient translation and peptide-bond synthesis on native or reconstituted 70S ribosomes in vitro. Probably functions indirectly by altering the affinity of the ribosome for aminoacyl-tRNA, thus increasing their reactivity as acceptors for peptidyl transferase. The polypeptide is Elongation factor P (Pelodictyon phaeoclathratiforme (strain DSM 5477 / BU-1)).